Consider the following 305-residue polypeptide: GMP synthase [glutamine-hydrolyzing] subunit B (305 aa).

Residues 2 to 185 (VETEEFIAEA…LGLEEVISER (184 aa)) form the GMPS ATP-PPase domain. 29–35 (SGGVDSS) is a binding site for ATP.

Heterodimer composed of a glutamine amidotransferase subunit (A) and a GMP-binding subunit (B).

It catalyses the reaction XMP + L-glutamine + ATP + H2O = GMP + L-glutamate + AMP + diphosphate + 2 H(+). The protein operates within purine metabolism; GMP biosynthesis; GMP from XMP (L-Gln route): step 1/1. Catalyzes the synthesis of GMP from XMP. The polypeptide is GMP synthase [glutamine-hydrolyzing] subunit B (Halorubrum lacusprofundi (strain ATCC 49239 / DSM 5036 / JCM 8891 / ACAM 34)).